A 930-amino-acid polypeptide reads, in one-letter code: Translation initiation factor IF-2 (930 aa).

A compositionally biased stretch (low complexity) spans phenylalanine 50–valine 67. Disordered regions lie at residues phenylalanine 50–glutamate 217 and glutamate 260–proline 346. 2 stretches are compositionally biased toward basic and acidic residues: residues serine 68 to proline 90 and phenylalanine 110 to arginine 125. Residues lysine 129 to arginine 141 are compositionally biased toward low complexity. Basic and acidic residues-rich tracts occupy residues arginine 157 to lysine 167 and valine 262 to arginine 295. Positions asparagine 309–asparagine 318 are enriched in low complexity. Residues valine 337–proline 346 are compositionally biased toward basic and acidic residues. The tr-type G domain maps to glutamate 432–glutamate 599. The G1 stretch occupies residues glycine 441–threonine 448. Residue glycine 441–threonine 448 participates in GTP binding. The segment at glycine 466–histidine 470 is G2. Positions aspartate 487–glycine 490 are G3. GTP contacts are provided by residues aspartate 487–histidine 491 and asparagine 541–aspartate 544. The segment at asparagine 541–aspartate 544 is G4. The segment at serine 577–lysine 579 is G5.

Belongs to the TRAFAC class translation factor GTPase superfamily. Classic translation factor GTPase family. IF-2 subfamily.

The protein localises to the cytoplasm. One of the essential components for the initiation of protein synthesis. Protects formylmethionyl-tRNA from spontaneous hydrolysis and promotes its binding to the 30S ribosomal subunits. Also involved in the hydrolysis of GTP during the formation of the 70S ribosomal complex. This Streptococcus pneumoniae (strain Taiwan19F-14) protein is Translation initiation factor IF-2.